A 1066-amino-acid polypeptide reads, in one-letter code: DNA-directed RNA polymerase subunit beta (1066 aa).

It belongs to the RNA polymerase beta chain family. As to quaternary structure, in plastids the minimal PEP RNA polymerase catalytic core is composed of four subunits: alpha, beta, beta', and beta''. When a (nuclear-encoded) sigma factor is associated with the core the holoenzyme is formed, which can initiate transcription.

It is found in the plastid. Its subcellular location is the chloroplast. The catalysed reaction is RNA(n) + a ribonucleoside 5'-triphosphate = RNA(n+1) + diphosphate. Functionally, DNA-dependent RNA polymerase catalyzes the transcription of DNA into RNA using the four ribonucleoside triphosphates as substrates. This Psilotum nudum (Whisk fern) protein is DNA-directed RNA polymerase subunit beta.